The sequence spans 556 residues: Urocanate hydratase (556 aa).

NAD(+) is bound by residues 52–53 (GG), Q130, 176–178 (GMG), E196, R201, 242–243 (NA), 263–267 (QTSAH), 273–274 (YL), and Y322. C410 is a catalytic residue. Residue G492 coordinates NAD(+).

It belongs to the urocanase family. NAD(+) serves as cofactor.

It is found in the cytoplasm. It carries out the reaction 4-imidazolone-5-propanoate = trans-urocanate + H2O. It functions in the pathway amino-acid degradation; L-histidine degradation into L-glutamate; N-formimidoyl-L-glutamate from L-histidine: step 2/3. Functionally, catalyzes the conversion of urocanate to 4-imidazolone-5-propionate. The sequence is that of Urocanate hydratase from Bradyrhizobium diazoefficiens (strain JCM 10833 / BCRC 13528 / IAM 13628 / NBRC 14792 / USDA 110).